The chain runs to 285 residues: NAD kinase (285 aa).

The active-site Proton acceptor is the Asp67. NAD(+)-binding positions include 67 to 68 (DG), 141 to 142 (ND), Arg152, Lys169, Asp171, 182 to 187 (TGYSLS), and Gln242.

Belongs to the NAD kinase family. A divalent metal cation serves as cofactor.

It localises to the cytoplasm. The catalysed reaction is NAD(+) + ATP = ADP + NADP(+) + H(+). Functionally, involved in the regulation of the intracellular balance of NAD and NADP, and is a key enzyme in the biosynthesis of NADP. Catalyzes specifically the phosphorylation on 2'-hydroxyl of the adenosine moiety of NAD to yield NADP. The chain is NAD kinase from Trichlorobacter lovleyi (strain ATCC BAA-1151 / DSM 17278 / SZ) (Geobacter lovleyi).